The sequence spans 146 residues: MNRLLRLRFKLKMKKPDFIRQEAHRHKRLGEKWRRPKGRHSKMRLKWKEKPPVVEIGYRSPKAVRGLHPSGLEDVLVYNVKDLEKLNPETQGARIASTVGKRKKIEIIIRARELGIRILNISEEKQEELLKLAEKQEAQEVNETNE.

Belongs to the eukaryotic ribosomal protein eL32 family.

The chain is Large ribosomal subunit protein eL32 (rpl32e) from Methanocaldococcus jannaschii (strain ATCC 43067 / DSM 2661 / JAL-1 / JCM 10045 / NBRC 100440) (Methanococcus jannaschii).